The chain runs to 34 residues: Potassium channel toxin (34 aa).

3 cysteine pairs are disulfide-bonded: cysteine 6–cysteine 25, cysteine 11–cysteine 29, and cysteine 15–cysteine 31.

This sequence belongs to the short scorpion toxin superfamily. Potassium channel inhibitor family. Alpha-KTx 21 subfamily. In terms of tissue distribution, expressed by the venom gland.

It localises to the secreted. Toxin that blocks voltage-gated potassium channels (Kv). The polypeptide is Potassium channel toxin (Tityus metuendus (Scorpion)).